Here is a 1017-residue protein sequence, read N- to C-terminus: Stereoselective keto-reductase af490 (1017 aa).

The interval 6–138 (NELSGSQVPG…GRLRMTFAGH (133 aa)) is N-terminal hotdog fold. The PKS/mFAS DH domain occupies 6 to 311 (NELSGSQVPG…MSPIAPSTEK (306 aa)). A dehydratase (DH) region spans residues 8–306 (LSGSQVPGAT…LEGLTMSPIA (299 aa)). Residues 153-311 (LRPVSISPFY…MSPIAPSTEK (159 aa)) form a C-terminal hotdog fold region. The tract at residues 532 to 720 (QIRFLRAPFD…VQGGRLLIPR (189 aa)) is ketoreductase (KR).

It carries out the reaction fumagillol + NADP(+) = 5-dehydrofumagillol + NADPH + H(+). It functions in the pathway secondary metabolite biosynthesis; terpenoid biosynthesis. Its function is as follows. Stereoselective keto-reductase; part of the gene cluster that mediates the biosynthesis of fumagillin, a meroterpenoid that has numerous biological activities including irreversible inhibition of human type 2 methionine aminopeptidase (METAP2). Within the pathway, the keto-reductase af490 acts as a 5-dehydrofumagillol 5-reductase that stereoselectively reduces 5-keto-fumagillol to 5R-hydroxy-seco-sesquiterpene. The pathway begins with the conversion of farnesyl pyrophosphate (FPP) to beta-trans-bergamotene by the membrane-bound beta-trans-bergamotene synthase af520. The multifunctional cytochrome P450 monooxygenase af510 then converts beta-trans-bergamotene into 5-keto-demethoxyfumagillol via several oxydation steps. 5-keto-demethoxyfumagillol is then subjected to successive C-6 hydroxylation and O-methylation by the dioxygenase af480 and O-methyltransferase af390-400, respectively, to yield 5-keto-fumagillol, which is then stereoselectively reduced by the keto-reductase af490 to 5R-hydroxy-seco-sesquiterpene. The next step is the polyketide transferase af380-catalyzed transfer of a dodecapentaenoyl group synthesized by the polyketide synthase af370 onto 5R-hydroxy-seco-sesquiterpene which leads to the production of prefumagillin. Finally, oxidative cleavage by the monooxygenase af470 converts prefumagillin to fumagillin. This Aspergillus fumigatus (strain ATCC MYA-4609 / CBS 101355 / FGSC A1100 / Af293) (Neosartorya fumigata) protein is Stereoselective keto-reductase af490.